A 433-amino-acid chain; its full sequence is DNA polymerase processivity factor (433 aa).

The segment at 274-433 (RGDPFDKNYV…VPNTKKQKCG (160 aa)) is disordered. The segment covering 298 to 307 (SLSSLANAGG) has biased composition (low complexity). Composition is skewed to gly residues over residues 325–336 (GLGGLGGGGGGG) and 344–359 (GGGG…GGGG). Positions 360-376 (GDHDHGLSSKEKYEQHK) are enriched in basic and acidic residues. Gly residues predominate over residues 385–398 (GGSGGGGGGGGGGL).

Belongs to the herpesviridae polymerase accessory protein family. As to quaternary structure, forms homodimers. Interacts with host SMARCB1. Interacts with host NCL/nucleolin; this interaction is important for the organization of proteins within viral replication compartments. Interacts with UL112/UL113; this interaction is necessary for efficient viral DNA replication. Interacts with UL84. Interacts with the uracil DNA glycosylase UL114. Interacts with the DNA polymerase catalytic subunit UL54. Interacts with host IRF3. Interacts with host RELA. In terms of processing, phosphorylated by UL97 on serine residues, phosphorylation seems important for UL44 nuclear entry but does not directly affect its role in replication. Sumoylated. Sumoylation on Lys-410 increases viral DNA replication.

Its subcellular location is the virion. It localises to the host nucleus. Functionally, accessory subunit of the DNA polymerase that plays an essential role in viral DNA replication and acts by increasing the processivity of polymerization. Forms dimers that binds to double-stranded DNA and UL54 specifically to stimulates long chain DNA synthesis efficiently. Plays an important role in maintaining the structure of viral replication compartments by interacting with host nucleolin/NUC. In addition, suppresses innate immune responses through effects on host IRF3 and NF-kappa-B. Mechanistically, interfere with the binding of IRF3 and the p65 NF-kappa-B subunit to the promoters of antiviral genes, thereby inhibiting the expression of these genes. In Human cytomegalovirus (strain Merlin) (HHV-5), this protein is DNA polymerase processivity factor (UL44).